The sequence spans 350 residues: Anthranilate phosphoribosyltransferase (350 aa).

5-phospho-alpha-D-ribose 1-diphosphate is bound by residues Gly94, 97-98 (GD), Thr102, 104-107 (NVST), 122-130 (KHGNRSVSS), and Ser134. Gly94 provides a ligand contact to anthranilate. Ser106 lines the Mg(2+) pocket. Asn125 is an anthranilate binding site. Arg180 lines the anthranilate pocket. Mg(2+) is bound by residues Asp239 and Glu240.

Belongs to the anthranilate phosphoribosyltransferase family. As to quaternary structure, homodimer. It depends on Mg(2+) as a cofactor.

It carries out the reaction N-(5-phospho-beta-D-ribosyl)anthranilate + diphosphate = 5-phospho-alpha-D-ribose 1-diphosphate + anthranilate. Its pathway is amino-acid biosynthesis; L-tryptophan biosynthesis; L-tryptophan from chorismate: step 2/5. In terms of biological role, catalyzes the transfer of the phosphoribosyl group of 5-phosphorylribose-1-pyrophosphate (PRPP) to anthranilate to yield N-(5'-phosphoribosyl)-anthranilate (PRA). The sequence is that of Anthranilate phosphoribosyltransferase from Pelobacter propionicus (strain DSM 2379 / NBRC 103807 / OttBd1).